The primary structure comprises 73 residues: Translation initiation factor IF-1 (73 aa).

An S1-like domain is found at 1–72 (MAKDDVIEVE…TKGRITYRFI (72 aa)).

The protein belongs to the IF-1 family. In terms of assembly, component of the 30S ribosomal translation pre-initiation complex which assembles on the 30S ribosome in the order IF-2 and IF-3, IF-1 and N-formylmethionyl-tRNA(fMet); mRNA recruitment can occur at any time during PIC assembly.

It localises to the cytoplasm. Functionally, one of the essential components for the initiation of protein synthesis. Stabilizes the binding of IF-2 and IF-3 on the 30S subunit to which N-formylmethionyl-tRNA(fMet) subsequently binds. Helps modulate mRNA selection, yielding the 30S pre-initiation complex (PIC). Upon addition of the 50S ribosomal subunit IF-1, IF-2 and IF-3 are released leaving the mature 70S translation initiation complex. This chain is Translation initiation factor IF-1, found in Lactobacillus acidophilus (strain ATCC 700396 / NCK56 / N2 / NCFM).